A 207-amino-acid polypeptide reads, in one-letter code: MYVMTQSGWLELICGCMFSGKSEELIRRVRRAQFAKQEVKVFKPTIDNRYSEDAVVSHNGNSVIAIPVATPAEMFRYISAATDVVAIDEIQFFSDDIIDVVQTLADCGYRVIAAGLDQDFRGEPFGPVPALMAIAESVTKLQAVCTVCGSPASRTQRLINGAPASYDDPVILVGASEAYEPRCRHHHEVPGKPKKRYNHPLAGHTGE.

ATP contacts are provided by residues 15-22 and 88-91; these read GCMFSGKS and DEIQ. Glu89 (proton acceptor) is an active-site residue. Zn(2+) contacts are provided by Cys145, Cys148, Cys183, and His186. Basic residues predominate over residues 184-198; sequence RHHHEVPGKPKKRYN. The segment at 184–207 is disordered; it reads RHHHEVPGKPKKRYNHPLAGHTGE.

The protein belongs to the thymidine kinase family. Homotetramer.

Its subcellular location is the cytoplasm. The enzyme catalyses thymidine + ATP = dTMP + ADP + H(+). This is Thymidine kinase from Geobacillus kaustophilus (strain HTA426).